A 105-amino-acid polypeptide reads, in one-letter code: Fe-S protein maturation auxiliary factor PG_1777 (105 aa).

This sequence belongs to the Fe-S cluster assembly domain superfamily. MIP18-like family. In terms of assembly, putative homodimer; may be disulfide-linked.

In terms of biological role, iron binding protein that protects DNA from Fenton chemistry-mediated damage caused by hydrogen peroxide induced oxidative stress. May be involved in iron-sulfur cluster assembly. The chain is Fe-S protein maturation auxiliary factor PG_1777 from Porphyromonas gingivalis (strain ATCC BAA-308 / W83).